The primary structure comprises 205 residues: Small ribosomal subunit protein uS4 (205 aa).

Positions 18–46 (NIWGRSKSPVNRREYGPGQHGQRRKGKLS) are disordered. One can recognise an S4 RNA-binding domain in the interval 94 to 157 (RRLDAVVYRA…RQMTLVLEAQ (64 aa)).

The protein belongs to the universal ribosomal protein uS4 family. As to quaternary structure, part of the 30S ribosomal subunit. Contacts protein S5. The interaction surface between S4 and S5 is involved in control of translational fidelity.

Functionally, one of the primary rRNA binding proteins, it binds directly to 16S rRNA where it nucleates assembly of the body of the 30S subunit. Its function is as follows. With S5 and S12 plays an important role in translational accuracy. The polypeptide is Small ribosomal subunit protein uS4 (Xanthobacter autotrophicus (strain ATCC BAA-1158 / Py2)).